The sequence spans 92 residues: Small ribosomal subunit protein uS19 (92 aa).

It belongs to the universal ribosomal protein uS19 family.

Its function is as follows. Protein S19 forms a complex with S13 that binds strongly to the 16S ribosomal RNA. In Rhodospirillum rubrum (strain ATCC 11170 / ATH 1.1.1 / DSM 467 / LMG 4362 / NCIMB 8255 / S1), this protein is Small ribosomal subunit protein uS19.